The chain runs to 641 residues: Protein zwilch (641 aa).

Ser-312 carries the post-translational modification Phosphoserine.

Belongs to the ZWILCH family. As to quaternary structure, component of the RZZ complex composed of rod, Zw10 and Zwilch.

Its subcellular location is the cytoplasm. It is found in the chromosome. The protein resides in the centromere. The protein localises to the kinetochore. It localises to the cytoskeleton. Its subcellular location is the spindle. Its function is as follows. Essential component of the mitotic checkpoint, which prevents cells from prematurely exiting mitosis. Required for the assembly of the dynein-dynactin, Mad2 complexes and spindly/CG15415 onto kinetochores. Its function related to the spindle assembly machinery is proposed to depend on its association in the RZZ complex. Failure to assemble the complex due to the absence of any one of its components, results in the incorrect redistribution of the remaining components to diverse membrane compartments. This is Protein zwilch from Drosophila melanogaster (Fruit fly).